Reading from the N-terminus, the 60-residue chain is Large ribosomal subunit protein uL30 (60 aa).

This sequence belongs to the universal ribosomal protein uL30 family. In terms of assembly, part of the 50S ribosomal subunit.

The polypeptide is Large ribosomal subunit protein uL30 (Kineococcus radiotolerans (strain ATCC BAA-149 / DSM 14245 / SRS30216)).